The following is a 180-amino-acid chain: Large ribosomal subunit protein uL6 (180 aa).

This sequence belongs to the universal ribosomal protein uL6 family. Part of the 50S ribosomal subunit.

Its function is as follows. This protein binds to the 23S rRNA, and is important in its secondary structure. It is located near the subunit interface in the base of the L7/L12 stalk, and near the tRNA binding site of the peptidyltransferase center. In Thermus aquaticus, this protein is Large ribosomal subunit protein uL6.